A 192-amino-acid chain; its full sequence is Ion-translocating oxidoreductase complex subunit B (192 aa).

Residues 1–26 form a hydrophobic region; it reads MNAIWIAVAAVSLLGLAFGAILGYAS. A 4Fe-4S domain is found at 32–91; sequence EDDPVVEKIDEILPQSQCGQCGYPGCRPYAEAISCNGEKINRCAPGGEAVMLKIAELLNV. [4Fe-4S] cluster is bound by residues cysteine 49, cysteine 52, cysteine 57, cysteine 74, cysteine 117, cysteine 120, cysteine 123, cysteine 127, cysteine 147, cysteine 150, cysteine 153, and cysteine 157. 2 consecutive 4Fe-4S ferredoxin-type domains span residues 108 to 137 and 138 to 167; these read MVAV…GATR and AMHT…LQPV.

This sequence belongs to the 4Fe4S bacterial-type ferredoxin family. RnfB subfamily. As to quaternary structure, the complex is composed of six subunits: RsxA, RsxB, RsxC, RsxD, RsxE and RsxG. [4Fe-4S] cluster is required as a cofactor.

It localises to the cell inner membrane. Its function is as follows. Part of a membrane-bound complex that couples electron transfer with translocation of ions across the membrane. Required to maintain the reduced state of SoxR. In Shigella dysenteriae serotype 1 (strain Sd197), this protein is Ion-translocating oxidoreductase complex subunit B.